Here is a 236-residue protein sequence, read N- to C-terminus: Protein YIPF6 (236 aa).

The residue at position 2 (Ala-2) is an N-acetylalanine. Over 2 to 84 the chain is Cytoplasmic; that stretch reads AEAEDSPGEQ…HVLYPRKSNA (83 aa). Ser-7 is modified (phosphoserine). Residues 85–105 form a helical membrane-spanning segment; it reads LLRDWDLWGPLILCVTLALML. Over 106-116 the chain is Lumenal; sequence QKSSIDGKNDG. Residues 117-137 form a helical membrane-spanning segment; sequence GGPEFAEVFVIIWFGAVTITL. Residues 138 to 147 lie on the Cytoplasmic side of the membrane; the sequence is NSKLLGGNIS. Residues 148 to 168 form a helical membrane-spanning segment; the sequence is FFQSLCVLGYCILPLNIAMLI. Residues 169-185 are Lumenal-facing; that stretch reads CRLLLLAGQGPINFMIR. A helical membrane pass occupies residues 186-206; sequence LFVVLLMFAWSVVASTAFLAD. Residues 207-213 lie on the Cytoplasmic side of the membrane; it reads SQPPNRK. The chain crosses the membrane as a helical span at residues 214 to 234; sequence ALAVYPVFLFYFVISWMILTF. Residues 235–236 are Lumenal-facing; sequence TP.

The protein belongs to the YIP1 family. In terms of assembly, predominantly interacts with YIPF1 or YIPF2, but may also form a ternary complex with YIPF1 and YIPF2. This interaction may stabilize YIPF1 and YIPF2.

It localises to the golgi apparatus membrane. May be required for stable YIPF1 and YIPF2 protein expression. This is Protein YIPF6 (Yipf6) from Mus musculus (Mouse).